The chain runs to 354 residues: UDP-3-O-acylglucosamine N-acyltransferase (354 aa).

The active-site Proton acceptor is H245.

The protein belongs to the transferase hexapeptide repeat family. LpxD subfamily. In terms of assembly, homotrimer.

It catalyses the reaction a UDP-3-O-[(3R)-3-hydroxyacyl]-alpha-D-glucosamine + a (3R)-hydroxyacyl-[ACP] = a UDP-2-N,3-O-bis[(3R)-3-hydroxyacyl]-alpha-D-glucosamine + holo-[ACP] + H(+). It participates in bacterial outer membrane biogenesis; LPS lipid A biosynthesis. Functionally, catalyzes the N-acylation of UDP-3-O-acylglucosamine using 3-hydroxyacyl-ACP as the acyl donor. Is involved in the biosynthesis of lipid A, a phosphorylated glycolipid that anchors the lipopolysaccharide to the outer membrane of the cell. The chain is UDP-3-O-acylglucosamine N-acyltransferase from Anaeromyxobacter dehalogenans (strain 2CP-1 / ATCC BAA-258).